The following is a 277-amino-acid chain: Bis(5'-nucleosyl)-tetraphosphatase, symmetrical (277 aa).

It belongs to the Ap4A hydrolase family.

The catalysed reaction is P(1),P(4)-bis(5'-adenosyl) tetraphosphate + H2O = 2 ADP + 2 H(+). Functionally, hydrolyzes diadenosine 5',5'''-P1,P4-tetraphosphate to yield ADP. This chain is Bis(5'-nucleosyl)-tetraphosphatase, symmetrical, found in Bordetella bronchiseptica (strain ATCC BAA-588 / NCTC 13252 / RB50) (Alcaligenes bronchisepticus).